The sequence spans 690 residues: Highly divergent homeobox (690 aa).

Residues 3-63 (LRSVFTVEQQ…NKRRKMSSKN (61 aa)) constitute a DNA-binding region (homeobox 1). 2 disordered regions span residues 55–76 (KRRKMSSKNSESGTATTGTSLS) and 112–132 (SPASSSSRQGTNKHTDTQITE). Low complexity predominate over residues 64-76 (SESGTATTGTSLS). Polar residues predominate over residues 113–123 (PASSSSRQGTN). Residues Lys-135, Lys-140, Lys-144, Lys-163, Lys-172, Lys-194, Lys-212, Lys-221, and Lys-232 each participate in a glycyl lysine isopeptide (Lys-Gly) (interchain with G-Cter in SUMO2) cross-link. The segment at residues 435–498 (ALQDRTQFSD…NRRRKYRLMG (64 aa)) is a DNA-binding region (homeobox 2). A disordered region spans residues 501-539 (VPPPRGGPADFSEQPESGSLSALTPGEEAGPEVGEDNDR). Lys-613 participates in a covalent cross-link: Glycyl lysine isopeptide (Lys-Gly) (interchain with G-Cter in SUMO2). Positions 664-690 (FNHASLEPDDTSFSVSSLSEKNVSESL) are disordered. Residues 674-690 (TSFSVSSLSEKNVSESL) show a composition bias toward polar residues.

Its subcellular location is the nucleus. This Homo sapiens (Human) protein is Highly divergent homeobox (HDX).